A 488-amino-acid polypeptide reads, in one-letter code: Centrosomal protein cep57l1 (488 aa).

The stretch at 71 to 226 (LESEKTHARD…AQVQTSLEVN (156 aa)) forms a coiled coil. 2 disordered regions span residues 232-272 (SASS…PPSK) and 311-342 (PRVSQKDPKTVEHKPSILPGGSRSIPTRLMSS). Over residues 241-250 (RKVKKKKQSK) the composition is skewed to basic residues. 2 stretches are compositionally biased toward basic and acidic residues: residues 259–270 (PSSKEPLSKEPP) and 314–325 (SQKDPKTVEHKP). The stretch at 377–403 (KNTDMREDLERELDYLVKQMEIKSDQI) forms a coiled coil. The disordered stretch occupies residues 416–464 (LKKTAKKQPRPPSTTKPAEDEQNIGATDPCTPRNKGNLANGTGTPNSKA). Residues 452 to 464 (NLANGTGTPNSKA) are compositionally biased toward polar residues.

It belongs to the translokin family. In terms of assembly, interacts with clip1, mis12, ndc80 and zwint. Interacts with gamma-tubulin.

Its subcellular location is the cytoplasm. It localises to the cytoskeleton. It is found in the microtubule organizing center. The protein localises to the centrosome. The protein resides in the chromosome. Its subcellular location is the centromere. It localises to the kinetochore. It is found in the spindle. Its function is as follows. Required for spindle microtubule attachment to both kinetochores and centrosomes. Also functions to tether minus-ends of spindle microtubules to centrosomes. May act by forming ring-like structures around microtubules, or by serving as a cross-linker or scaffold at the attachment site. This chain is Centrosomal protein cep57l1 (cep57l1), found in Xenopus laevis (African clawed frog).